The following is an 862-amino-acid chain: Cadherin-related family member 5 (862 aa).

The N-terminal stretch at 1 to 28 (MGAPALLWPPLLLPLLTVLFGHLPGTLA) is a signal peptide. The Extracellular segment spans residues 29 to 671 (QAQVCSANQT…GQRFSTVDMA (643 aa)). Asn36, Asn45, Asn135, Asn173, Asn201, Asn311, Asn408, Asn438, and Asn479 each carry an N-linked (GlcNAc...) asparagine glycan. Cadherin domains follow at residues 40–127 (FTMN…APEF), 128–240 (PFTI…TPWF), 252–357 (IQAQ…PLQF), and 358–462 (SQSL…PPST). The segment at 452-658 (IQVSEREPPS…TTGPISGVGE (207 aa)) is disordered. Low complexity predominate over residues 461–500 (STESPTPPEAGGTTGPSSNTTLETPSTSGTSQGPATTSSG). Positions 529-652 (LGISTSPQTA…GTSQPTTTGP (124 aa)) are enriched in polar residues. Tandem repeats lie at residues 545–575 (TQTP…SGSS), 576–606 (TQTP…SGSS), and 607–636 (TQTP…PSGS). Residues 545-648 (TQTPKPGTSQ…TPKPGTSQPT (104 aa)) are 4 X 31 AA approximate tandem repeats. The stretch at 637-648 (TQTPKPGTSQPT) is one 4; truncated repeat. Residues 672 to 692 (VLGGVLGALLLLALIFLIILI) traverse the membrane as a helical segment. Residues 693–862 (HKHYRHRFTC…LGAVADNTYV (170 aa)) lie on the Cytoplasmic side of the membrane. A mediates interaction with USH1C and MYO7B and is required for proper localization to microvilli tips and function in microvilli organization region spans residues 693–862 (HKHYRHRFTC…LGAVADNTYV (170 aa)). Disordered stretches follow at residues 706-803 (KAKE…EGGY) and 821-862 (LNEP…NTYV). Phosphoserine is present on residues Ser729, Ser751, and Ser755. Positions 739-768 (GPEPVQPPLRPPSPMSSSPTPPSSMPPSPQ) are enriched in pro residues. Position 758 is a phosphothreonine (Thr758). Residues Ser766 and Ser783 each carry the phosphoserine modification. A compositionally biased stretch (basic and acidic residues) spans 791-801 (LTKERRPEGEG). Thr825 is modified (phosphothreonine). A compositionally biased stretch (low complexity) spans 827-837 (DVDSASASGSE). Phosphoserine is present on residues Ser832, Ser834, and Ser836.

In terms of assembly, part of the IMAC/intermicrovillar adhesion complex/intermicrovillar tip-link complex composed of ANKS4B, MYO7B, USH1C, CDHR2 and CDHR5. Interacts (via cytoplasmic domain) with USH1C and MYO7B; required for proper localization of CDHR5 to microvilli tips and its function in brush border differentiation. Post-translationally, N- and O-glycosylated. As to expression, expressed predominantly in kidney. Also detected in lung and small intestine.

The protein localises to the apical cell membrane. The protein resides in the cell projection. Its subcellular location is the microvillus membrane. Functionally, intermicrovillar adhesion molecule that forms, via its extracellular domain, calcium-dependent heterophilic complexes with CDHR2 on adjacent microvilli. Thereby, controls the packing of microvilli at the apical membrane of epithelial cells. Through its cytoplasmic domain, interacts with microvillus cytoplasmic proteins to form the intermicrovillar adhesion complex/IMAC. This complex plays a central role in microvilli and epithelial brush border differentiation. This is Cadherin-related family member 5 from Rattus norvegicus (Rat).